Consider the following 229-residue polypeptide: Cytidylate kinase (229 aa).

12 to 20 is a binding site for ATP; sequence GPSGSGKGT.

It belongs to the cytidylate kinase family. Type 1 subfamily.

Its subcellular location is the cytoplasm. The catalysed reaction is CMP + ATP = CDP + ADP. It catalyses the reaction dCMP + ATP = dCDP + ADP. This chain is Cytidylate kinase, found in Stutzerimonas stutzeri (strain A1501) (Pseudomonas stutzeri).